The sequence spans 158 residues: Cyclic pyranopterin monophosphate synthase (158 aa).

Residues 74–76 (MCH) and 112–113 (ME) each bind substrate. Residue aspartate 127 is part of the active site.

It belongs to the MoaC family. In terms of assembly, homohexamer; trimer of dimers.

It catalyses the reaction (8S)-3',8-cyclo-7,8-dihydroguanosine 5'-triphosphate = cyclic pyranopterin phosphate + diphosphate. Its pathway is cofactor biosynthesis; molybdopterin biosynthesis. Its function is as follows. Catalyzes the conversion of (8S)-3',8-cyclo-7,8-dihydroguanosine 5'-triphosphate to cyclic pyranopterin monophosphate (cPMP). The protein is Cyclic pyranopterin monophosphate synthase of Helicobacter pylori (strain G27).